The chain runs to 81 residues: ATP synthase subunit c (81 aa).

The next 2 helical transmembrane spans lie at 7 to 27 (AASV…PGIG) and 57 to 77 (LAFM…LLFA).

This sequence belongs to the ATPase C chain family. As to quaternary structure, F-type ATPases have 2 components, F(1) - the catalytic core - and F(0) - the membrane proton channel. F(1) has five subunits: alpha(3), beta(3), gamma(1), delta(1), epsilon(1). F(0) has four main subunits: a(1), b(1), b'(1) and c(10-14). The alpha and beta chains form an alternating ring which encloses part of the gamma chain. F(1) is attached to F(0) by a central stalk formed by the gamma and epsilon chains, while a peripheral stalk is formed by the delta, b and b' chains.

The protein localises to the cellular thylakoid membrane. Its function is as follows. F(1)F(0) ATP synthase produces ATP from ADP in the presence of a proton or sodium gradient. F-type ATPases consist of two structural domains, F(1) containing the extramembraneous catalytic core and F(0) containing the membrane proton channel, linked together by a central stalk and a peripheral stalk. During catalysis, ATP synthesis in the catalytic domain of F(1) is coupled via a rotary mechanism of the central stalk subunits to proton translocation. Key component of the F(0) channel; it plays a direct role in translocation across the membrane. A homomeric c-ring of between 10-14 subunits forms the central stalk rotor element with the F(1) delta and epsilon subunits. The sequence is that of ATP synthase subunit c from Nostoc sp. (strain PCC 7120 / SAG 25.82 / UTEX 2576).